A 395-amino-acid polypeptide reads, in one-letter code: DDB1- and CUL4-associated factor 4-like protein 2 (395 aa).

WD repeat units follow at residues 268-307 and 312-351; these read SHDS…CVTQ and VNNS…LLTT.

In Homo sapiens (Human), this protein is DDB1- and CUL4-associated factor 4-like protein 2 (DCAF4L2).